A 1151-amino-acid chain; its full sequence is UDP-N-acetylglucosamine--peptide N-acetylglucosaminyltransferase (1151 aa).

TPR repeat units follow at residues 125 to 158, 193 to 226, 227 to 260, 261 to 294, 295 to 328, 329 to 362, 363 to 396, 397 to 430, 431 to 464, 465 to 498, 499 to 532, and 533 to 566; these read LKKV…DPNN, AEAY…KPEF, IDAY…NPDL, YCVR…QPQF, AVAW…DPNF, LDAY…SGNH, AVVH…QPHF, PDAY…CPTH, ADSQ…YPEF, AAAH…APTF, ADAY…NPAF, and ADAH…KPDF. Residues 567 to 577 form a TPR 13; truncated repeat; that stretch reads PDAYCNLAHCH. Positions 591-607 match the Nuclear localization signal motif; sequence RKLVQIVEDQLCKKRLP. The active-site Proton acceptor is the His612. UDP contacts are provided by residues Gln954, Lys957, 1010–1013, 1016–1019, 1034–1036, and Asp1040; these read VAAK, HVRR, and GHT.

This sequence belongs to the glycosyltransferase 41 family. O-GlcNAc transferase subfamily.

The protein localises to the nucleus. It localises to the cytoplasm. Its subcellular location is the perinuclear region. It catalyses the reaction L-seryl-[protein] + UDP-N-acetyl-alpha-D-glucosamine = 3-O-(N-acetyl-beta-D-glucosaminyl)-L-seryl-[protein] + UDP + H(+). It carries out the reaction L-threonyl-[protein] + UDP-N-acetyl-alpha-D-glucosamine = 3-O-(N-acetyl-beta-D-glucosaminyl)-L-threonyl-[protein] + UDP + H(+). Its pathway is protein modification; protein glycosylation. Functionally, addition of nucleotide-activated sugars directly onto the polypeptide through O-glycosidic linkage with the hydroxyl of serine or threonine. Influences tap habituation in the mechanosensory neurons cell autonomously. The protein is UDP-N-acetylglucosamine--peptide N-acetylglucosaminyltransferase (ogt-1) of Caenorhabditis elegans.